The sequence spans 269 residues: Ribonuclease HII (269 aa).

One can recognise an RNase H type-2 domain in the interval 28 to 222 (RHVAGADEAG…VSGRRGAPPR (195 aa)). A divalent metal cation contacts are provided by Asp34, Glu35, and Asp128.

It belongs to the RNase HII family. It depends on Mn(2+) as a cofactor. The cofactor is Mg(2+).

Its subcellular location is the cytoplasm. It catalyses the reaction Endonucleolytic cleavage to 5'-phosphomonoester.. In terms of biological role, endonuclease that specifically degrades the RNA of RNA-DNA hybrids. The protein is Ribonuclease HII of Salinispora arenicola (strain CNS-205).